Consider the following 507-residue polypeptide: Chromosomal replication initiator protein DnaA (507 aa).

The segment at M1–T112 is domain I, interacts with DnaA modulators. Residues R99–T162 are disordered. Residues V113 to T127 are compositionally biased toward polar residues. The interval V113–T166 is domain II. Residues S167–A383 are domain III, AAA+ region. Residues G211, G213, K214, and T215 each coordinate ATP. A domain IV, binds dsDNA region spans residues S384 to R507.

It belongs to the DnaA family. Oligomerizes as a right-handed, spiral filament on DNA at oriC.

Its subcellular location is the cytoplasm. In terms of biological role, plays an essential role in the initiation and regulation of chromosomal replication. ATP-DnaA binds to the origin of replication (oriC) to initiate formation of the DNA replication initiation complex once per cell cycle. Binds the DnaA box (a 9 base pair repeat at the origin) and separates the double-stranded (ds)DNA. Forms a right-handed helical filament on oriC DNA; dsDNA binds to the exterior of the filament while single-stranded (ss)DNA is stabiized in the filament's interior. The ATP-DnaA-oriC complex binds and stabilizes one strand of the AT-rich DNA unwinding element (DUE), permitting loading of DNA polymerase. After initiation quickly degrades to an ADP-DnaA complex that is not apt for DNA replication. Binds acidic phospholipids. The sequence is that of Chromosomal replication initiator protein DnaA from Mycobacterium bovis (strain ATCC BAA-935 / AF2122/97).